The sequence spans 334 residues: Glyceraldehyde-3-phosphate dehydrogenase (334 aa).

NAD(+) is bound by residues 12–13 (RI), Asp-35, Arg-79, and Ser-121. Residues 152–154 (SCT), Thr-183, Arg-198, 211–212 (TG), and Arg-234 contribute to the D-glyceraldehyde 3-phosphate site. Residue Cys-153 is the Nucleophile of the active site. Asn-315 provides a ligand contact to NAD(+).

It belongs to the glyceraldehyde-3-phosphate dehydrogenase family. As to quaternary structure, homotetramer.

It is found in the cytoplasm. The catalysed reaction is D-glyceraldehyde 3-phosphate + phosphate + NAD(+) = (2R)-3-phospho-glyceroyl phosphate + NADH + H(+). It functions in the pathway carbohydrate degradation; glycolysis; pyruvate from D-glyceraldehyde 3-phosphate: step 1/5. Functionally, catalyzes the oxidative phosphorylation of glyceraldehyde 3-phosphate (G3P) to 1,3-bisphosphoglycerate (BPG) using the cofactor NAD. The first reaction step involves the formation of a hemiacetal intermediate between G3P and a cysteine residue, and this hemiacetal intermediate is then oxidized to a thioester, with concomitant reduction of NAD to NADH. The reduced NADH is then exchanged with the second NAD, and the thioester is attacked by a nucleophilic inorganic phosphate to produce BPG. This chain is Glyceraldehyde-3-phosphate dehydrogenase (gap), found in Corynebacterium glutamicum (strain ATCC 13032 / DSM 20300 / JCM 1318 / BCRC 11384 / CCUG 27702 / LMG 3730 / NBRC 12168 / NCIMB 10025 / NRRL B-2784 / 534).